Reading from the N-terminus, the 294-residue chain is rRNA 2'-O-methyltransferase fibrillarin (294 aa).

Positions 1 to 62 (MGKDFKSGGG…GKFGAKGPRG (62 aa)) are disordered. The span at 20–56 (GPGGPGGRPFNKGPGGPGGPGGKFGGGRPGGPGGKFG) shows a compositional bias: gly residues. Residues Arg27, Arg47, and Arg61 each carry the asymmetric dimethylarginine modification. S-adenosyl-L-methionine-binding positions include 151–152 (TT), 170–171 (EF), 195–196 (DA), and 215–218 (DVAQ).

The protein belongs to the methyltransferase superfamily. Fibrillarin family. As to quaternary structure, component of box C/D small nucleolar ribonucleoprotein (snoRNP) particles. It is associated with the U3, U8 and U13 small nuclear RNAs. By homology to other fibrillarins, some or all of the N-terminal domain arginines are modified to asymmetric dimethylarginine (DMA).

It is found in the nucleus. Its subcellular location is the nucleolus. The catalysed reaction is L-glutaminyl-[histone H2A] + S-adenosyl-L-methionine = N(5)-methyl-L-glutaminyl-[histone H2A] + S-adenosyl-L-homocysteine + H(+). In terms of biological role, S-adenosyl-L-methionine-dependent methyltransferase that has the ability to methylate both RNAs and proteins. Involved in pre-rRNA processing. Utilizes the methyl donor S-adenosyl-L-methionine to catalyze the site-specific 2'-hydroxyl methylation of ribose moieties in pre-ribosomal RNA. Site specificity is provided by a guide RNA that base pairs with the substrate. Methylation occurs at a characteristic distance from the sequence involved in base pairing with the guide RNA. Also acts as a protein methyltransferase by mediating methylation of 'Gln-105' of histone H2A (H2AQ105me), a modification that impairs binding of the FACT complex and is specifically present at 35S ribosomal DNA locus. This chain is rRNA 2'-O-methyltransferase fibrillarin (FIB), found in Tetrahymena thermophila.